We begin with the raw amino-acid sequence, 345 residues long: S-adenosylmethionine:tRNA ribosyltransferase-isomerase (345 aa).

The protein belongs to the QueA family. Monomer.

It localises to the cytoplasm. The enzyme catalyses 7-aminomethyl-7-carbaguanosine(34) in tRNA + S-adenosyl-L-methionine = epoxyqueuosine(34) in tRNA + adenine + L-methionine + 2 H(+). It functions in the pathway tRNA modification; tRNA-queuosine biosynthesis. Functionally, transfers and isomerizes the ribose moiety from AdoMet to the 7-aminomethyl group of 7-deazaguanine (preQ1-tRNA) to give epoxyqueuosine (oQ-tRNA). This is S-adenosylmethionine:tRNA ribosyltransferase-isomerase from Helicobacter acinonychis (strain Sheeba).